Here is a 460-residue protein sequence, read N- to C-terminus: MAVSLWQQCIGRLQDELSAQQFSMWIRPLQAEMDGDTLVLYAPNRFVLDWVRDKYINIINQFFTEQMGNDAPKLRFDIGSRPSAKKPEPAPVAAVRVPNPQTKASVGTSFNTTEPVVNANHRSNINPTYQFDNFVEGKSNQLGKAAALQVAENPGGAYNPLFLYGGTGLGKTHLLHAVGNGIIKNNPNAKVVYMHSERFVQDMVKALQNNAIEEFKRYYRSVDALFIDDIQFFANKDRSQEEFFHTFNALLEGNHQIILTSDRYPKEIDGVEDRLKSRFGWGLTVAIEPPELETRVAILMRKAQESGINLPDEVAFFIAKRLRSNVRELEGALNRVIANANFTGRPITIDFVREALRDLLALQEKLVTIDNIQKTVAEYYKIKMADMLSKRRSRSVARPRQVAMALSKELTNQSLPEIGDAFGGRDHTTVLHACRKIAQLREESHDIKEDYANLIRTLSS.

The domain I, interacts with DnaA modulators stretch occupies residues 1–84 (MAVSLWQQCI…RFDIGSRPSA (84 aa)). The interval 84 to 123 (AKKPEPAPVAAVRVPNPQTKASVGTSFNTTEPVVNANHRS) is domain II. The interval 124-340 (NINPTYQFDN…GALNRVIANA (217 aa)) is domain III, AAA+ region. Residues G168, G170, K171, and T172 each contribute to the ATP site. Positions 341–460 (NFTGRPITID…YANLIRTLSS (120 aa)) are domain IV, binds dsDNA.

This sequence belongs to the DnaA family. As to quaternary structure, oligomerizes as a right-handed, spiral filament on DNA at oriC.

Its subcellular location is the cytoplasm. Plays an essential role in the initiation and regulation of chromosomal replication. ATP-DnaA binds to the origin of replication (oriC) to initiate formation of the DNA replication initiation complex once per cell cycle. Binds the DnaA box (a 9 base pair repeat at the origin) and separates the double-stranded (ds)DNA. Forms a right-handed helical filament on oriC DNA; dsDNA binds to the exterior of the filament while single-stranded (ss)DNA is stabiized in the filament's interior. The ATP-DnaA-oriC complex binds and stabilizes one strand of the AT-rich DNA unwinding element (DUE), permitting loading of DNA polymerase. After initiation quickly degrades to an ADP-DnaA complex that is not apt for DNA replication. Binds acidic phospholipids. In Shewanella sp. (strain MR-7), this protein is Chromosomal replication initiator protein DnaA.